A 428-amino-acid polypeptide reads, in one-letter code: Adenylosuccinate synthetase (428 aa).

Residues 12–18 (GDEGKGK) and 40–42 (GHT) each bind GTP. The active-site Proton acceptor is Asp13. Mg(2+)-binding residues include Asp13 and Gly40. IMP contacts are provided by residues 13-16 (DEGK), 38-41 (NAGH), Thr128, Arg142, Gln223, Thr238, and Arg302. His41 serves as the catalytic Proton donor. 298 to 304 (TTTGRPR) contributes to the substrate binding site. GTP is bound by residues Arg304, 330-332 (KLD), and 412-414 (SVG).

The protein belongs to the adenylosuccinate synthetase family. In terms of assembly, homodimer. Mg(2+) serves as cofactor.

The protein resides in the cytoplasm. It carries out the reaction IMP + L-aspartate + GTP = N(6)-(1,2-dicarboxyethyl)-AMP + GDP + phosphate + 2 H(+). The protein operates within purine metabolism; AMP biosynthesis via de novo pathway; AMP from IMP: step 1/2. Functionally, plays an important role in the de novo pathway of purine nucleotide biosynthesis. Catalyzes the first committed step in the biosynthesis of AMP from IMP. The protein is Adenylosuccinate synthetase of Brevibacillus brevis (strain 47 / JCM 6285 / NBRC 100599).